Reading from the N-terminus, the 401-residue chain is Canavanine gamma-lyase (401 aa).

K214 carries the post-translational modification N6-(pyridoxal phosphate)lysine.

It belongs to the trans-sulfuration enzymes family. Pyridoxal 5'-phosphate serves as cofactor.

The catalysed reaction is L-canavanine + H2O = N-hydroxyguanidine + L-homoserine. Functionally, lyase involved in the degradation of canavanine, the delta-oxa-analog of arginine, allowing growth on canavanine as sole nitrogen and carbon source. Catalyzes the elimination of hydroxyguanidine from canavanine with a subsequent water addition to yield homoserine. The sequence is that of Canavanine gamma-lyase from Rhizobium leguminosarum bv. trifolii (strain WSM2304).